Consider the following 142-residue polypeptide: Hemoglobin subunit alpha-1/2 (142 aa).

A Globin domain is found at 2 to 142 (VLSPADKTNI…VSTVLTSKYR (141 aa)). Ser4 is subject to Phosphoserine. At Lys8 the chain carries N6-succinyllysine. Thr9 bears the Phosphothreonine mark. Position 12 is an N6-succinyllysine (Lys12). Lys17 carries the N6-acetyllysine; alternate modification. Lys17 bears the N6-succinyllysine; alternate mark. At Tyr25 the chain carries Phosphotyrosine. Residue Lys41 is modified to N6-succinyllysine. Position 59 (His59) interacts with O2. Residue His88 coordinates heme b. Residue Ser103 is modified to Phosphoserine. Thr109 carries the post-translational modification Phosphothreonine. Ser125 carries the phosphoserine modification. Phosphothreonine is present on residues Thr135 and Thr138. At Ser139 the chain carries Phosphoserine.

Belongs to the globin family. Heterotetramer of two alpha chains and two beta chains. As to expression, red blood cells.

Functionally, involved in oxygen transport from the lung to the various peripheral tissues. The polypeptide is Hemoglobin subunit alpha-1/2 (Oryctolagus cuniculus (Rabbit)).